The primary structure comprises 242 residues: Exosome complex component ski6 (242 aa).

This sequence belongs to the RNase PH family. Component of the RNA exosome complex. Specifically part of the catalytically inactive RNA exosome core complex (Exo-9) which may associate with the catalytic subunits rrp6 and dis3 in cytoplasmic- and nuclear-specific RNA exosome complex forms. Exo-9 is formed by a hexameric base ring of RNase PH domain-containing subunits and a cap ring consisting of csl4, rrp4 and rrp40.

It is found in the cytoplasm. It localises to the nucleus. The protein localises to the nucleolus. In terms of biological role, non-catalytic component of the RNA exosome complex which has 3'-&gt;5' exoribonuclease activity and participates in a multitude of cellular RNA processing and degradation events. In the nucleus, the RNA exosome complex is involved in proper maturation of stable RNA species such as rRNA, snRNA and snoRNA, in the elimination of RNA processing by-products and non-coding 'pervasive' transcripts, such as antisense RNA species and cryptic unstable transcripts (CUTs), and of mRNAs with processing defects, thereby limiting or excluding their export to the cytoplasm. In the cytoplasm, the RNA exosome complex is involved in general mRNA turnover and in RNA surveillance pathways, preventing translation of aberrant mRNAs. The catalytic inactive RNA exosome core complex of 9 subunits (Exo-9) is proposed to play a pivotal role in the binding and presentation of RNA for ribonucleolysis, and to serve as a scaffold for the association with catalytic subunits and accessory proteins or complexes. ski6 is part of the hexameric ring of RNase PH domain-containing subunits proposed to form a central channel which threads RNA substrates for degradation. The sequence is that of Exosome complex component ski6 (ski6) from Schizosaccharomyces pombe (strain 972 / ATCC 24843) (Fission yeast).